A 272-amino-acid chain; its full sequence is 5'-nucleotidase SurE (272 aa).

The a divalent metal cation site is built by aspartate 28, aspartate 29, serine 59, and asparagine 115.

Belongs to the SurE nucleotidase family. A divalent metal cation is required as a cofactor.

Its subcellular location is the cytoplasm. The catalysed reaction is a ribonucleoside 5'-phosphate + H2O = a ribonucleoside + phosphate. In terms of biological role, nucleotidase that shows phosphatase activity on nucleoside 5'-monophosphates. In Chlorobium chlorochromatii (strain CaD3), this protein is 5'-nucleotidase SurE.